We begin with the raw amino-acid sequence, 706 residues long: Glycylpeptide N-tetradecanoyltransferase (706 aa).

Residues 1–119 (MSGIAGTSQD…LASGSSREGK (119 aa)) form a disordered region. Residues 7–42 (TSQDTSVAASASSSSTRPAAASSSIAPPSPSLTTAP) show a composition bias toward low complexity. A compositionally biased stretch (acidic residues) spans 47–65 (EQDDDDDQENDDEEEEEEG). The span at 78–95 (KQRKKKKSKAAAKLRKKL) shows a compositional bias: basic residues. Residues 180–183 (HKFW), 317–319 (LCV), and 325–329 (SKRLA) each bind tetradecanoyl-CoA. The Proton acceptor; via carboxylate role is filled by valine 706.

This sequence belongs to the NMT family. In terms of assembly, monomer.

It localises to the cytoplasm. The catalysed reaction is N-terminal glycyl-[protein] + tetradecanoyl-CoA = N-tetradecanoylglycyl-[protein] + CoA + H(+). Functionally, adds a myristoyl group to the N-terminal glycine residue of certain cellular proteins. The polypeptide is Glycylpeptide N-tetradecanoyltransferase (NMT1) (Mycosarcoma maydis (Corn smut fungus)).